Reading from the N-terminus, the 617-residue chain is Leucine aminopeptidase 2 (617 aa).

Residues 139-141 (QCQ) and 271-276 (PYGGME) each bind a peptide. His300 contacts Zn(2+). Glu301 (proton acceptor) is an active-site residue. Positions 304 and 323 each coordinate Zn(2+). Tyr388 functions as the Proton donor in the catalytic mechanism.

This sequence belongs to the peptidase M1 family. It depends on Zn(2+) as a cofactor.

The protein resides in the cytoplasm. Its subcellular location is the nucleus. The catalysed reaction is an epoxide + H2O = an ethanediol. Aminopeptidase that preferentially cleaves di- and tripeptides. Also has low epoxide hydrolase activity (in vitro). Can hydrolyze the epoxide leukotriene LTA(4) but it forms preferentially 5,6-dihydroxy-7,9,11,14-eicosatetraenoic acid rather than the cytokine leukotriene B(4) as the product compared to the homologous mammalian enzyme (in vitro). In Neosartorya fischeri (strain ATCC 1020 / DSM 3700 / CBS 544.65 / FGSC A1164 / JCM 1740 / NRRL 181 / WB 181) (Aspergillus fischerianus), this protein is Leucine aminopeptidase 2.